Here is a 179-residue protein sequence, read N- to C-terminus: Cellular nucleic acid-binding protein homolog (179 aa).

7 consecutive CCHC-type zinc fingers follow at residues 17-34 (PRCY…ECTK), 36-53 (SICY…ECTE), 58-75 (KTCY…DCPS), 83-100 (AECY…DCRT), 116-133 (MNCY…DCTM), 135-152 (VKCY…ECQQ), and 157-174 (QLCY…NCTS).

To human CNBP and to retroviral nucleic acid binding proteins (NBP). Phosphorylated.

It localises to the nucleus. Its function is as follows. Acts in the sexual differentiation pathway. Is required for efficient conjugation. Double-stranded DNA-binding protein. The sequence is that of Cellular nucleic acid-binding protein homolog (byr3) from Schizosaccharomyces pombe (strain 972 / ATCC 24843) (Fission yeast).